The following is a 202-amino-acid chain: ATP-dependent Clp protease proteolytic subunit (202 aa).

The active-site Nucleophile is the serine 98. Residue histidine 123 is part of the active site.

Belongs to the peptidase S14 family. As to quaternary structure, fourteen ClpP subunits assemble into 2 heptameric rings which stack back to back to give a disk-like structure with a central cavity, resembling the structure of eukaryotic proteasomes.

The protein resides in the cytoplasm. It catalyses the reaction Hydrolysis of proteins to small peptides in the presence of ATP and magnesium. alpha-casein is the usual test substrate. In the absence of ATP, only oligopeptides shorter than five residues are hydrolyzed (such as succinyl-Leu-Tyr-|-NHMec, and Leu-Tyr-Leu-|-Tyr-Trp, in which cleavage of the -Tyr-|-Leu- and -Tyr-|-Trp bonds also occurs).. Functionally, cleaves peptides in various proteins in a process that requires ATP hydrolysis. Has a chymotrypsin-like activity. Plays a major role in the degradation of misfolded proteins. The polypeptide is ATP-dependent Clp protease proteolytic subunit (Magnetococcus marinus (strain ATCC BAA-1437 / JCM 17883 / MC-1)).